The chain runs to 359 residues: MMP endo-(1,4)-3-O-methyl-alpha-D-mannosidase (359 aa).

Monomer in solution.

It catalyses the reaction Endohydrolysis of 3-O-methyl-alpha-D-mannosyl-(1-&gt;4)-3-O-methyl-D-mannose linkages within (1,4)-3-O-methyl-alpha-D-mannnan substrates.. Its function is as follows. Hydrolase involved in the biosynthesis of 3-O-methylmannose polysaccharides (MMP), which are intracellular polymethylated polysaccharides implicated in the modulation of fatty acid metabolism in non-tuberculous mycobacteria. Highly specific hydrolase that catalyzes the internal cleavage of MMP. Is able to hydrolyze purified MMP into distinct lower order oligomannosides but does not cleave acylated or deacylated forms of 6-O-methylglucose lipopolysaccharide (MGLP), beta-mannans, synthetic 4alpha-oligomannosides or its own reaction products. Products were identified as four distinct oligomannosides differing in the number of mannose units (4 to 8) and methylation pattern (free or methylated C1-OH). Might serve as a recycling enzyme that hydrolyzes mature MMP into defined-size smaller oligomannosides that are, in turn, substrates for ManT and MeT1 activities for further processing into new daughter MMP chains. The polypeptide is MMP endo-(1,4)-3-O-methyl-alpha-D-mannosidase (Mycolicibacterium hassiacum (strain DSM 44199 / CIP 105218 / JCM 12690 / 3849) (Mycobacterium hassiacum)).